The primary structure comprises 433 residues: Signal recognition particle 54 kDa protein (433 aa).

Residues Gly106 to Thr113, Asp186 to Arg190, and Thr244 to Asp247 each bind GTP.

The protein belongs to the GTP-binding SRP family. SRP54 subfamily. As to quaternary structure, part of the signal recognition particle protein translocation system, which is composed of SRP and FtsY. Archaeal SRP consists of a 7S RNA molecule of 300 nucleotides and two protein subunits: SRP54 and SRP19.

Its subcellular location is the cytoplasm. The enzyme catalyses GTP + H2O = GDP + phosphate + H(+). In terms of biological role, involved in targeting and insertion of nascent membrane proteins into the cytoplasmic membrane. Binds to the hydrophobic signal sequence of the ribosome-nascent chain (RNC) as it emerges from the ribosomes. The SRP-RNC complex is then targeted to the cytoplasmic membrane where it interacts with the SRP receptor FtsY. This chain is Signal recognition particle 54 kDa protein, found in Pyrobaculum aerophilum (strain ATCC 51768 / DSM 7523 / JCM 9630 / CIP 104966 / NBRC 100827 / IM2).